The following is a 195-amino-acid chain: MSIDRKKVEEHIRGLLVAIGENPDREGLKETPSRVAQMYQEVFEGISYTNDEIAEMFNKTFEEDLVIPKDNKEIVLVKDIDIFSYCEHHMALMYNMKVAVAYIPNDKILGLSKIARIADMVGKRLQLQERIGSDIAEIMQKITDSEDVAVIVEGQHACMTTRGIKNTGSRTTTTTLRGAFKTDTNLTNRLMMLYK.

Zn(2+)-binding residues include C86, H89, and C158.

It belongs to the GTP cyclohydrolase I family. In terms of assembly, homomer.

It catalyses the reaction GTP + H2O = 7,8-dihydroneopterin 3'-triphosphate + formate + H(+). It participates in cofactor biosynthesis; 7,8-dihydroneopterin triphosphate biosynthesis; 7,8-dihydroneopterin triphosphate from GTP: step 1/1. The protein is GTP cyclohydrolase 1 of Ruminiclostridium cellulolyticum (strain ATCC 35319 / DSM 5812 / JCM 6584 / H10) (Clostridium cellulolyticum).